Reading from the N-terminus, the 690-residue chain is Eukaryotic translation initiation factor 3 subunit B (690 aa).

The segment covering 1–11 (MAKKKSEEHSS) has biased composition (basic and acidic residues). The disordered stretch occupies residues 1–33 (MAKKKSEEHSSADANDSDYQEEPNFDDPPNFVD). A compositionally biased stretch (acidic residues) spans 15-25 (NDSDYQEEPNF). The region spanning 57 to 141 (SVVVVDNIPK…HTFAVNLFTD (85 aa)) is the RRM domain. 5 WD repeats span residues 207–246 (TRER…KIQK), 293–331 (DGMS…LLDL), 334–369 (IKIP…TLME), 442–484 (EIRE…KPSL), and 530–575 (PDHF…IKRT). Residues 614–645 (QKDRLRLTRASKELLEKRSQLRETFMEYRNKR) are a coiled coil.

Belongs to the eIF-3 subunit B family. In terms of assembly, component of the eukaryotic translation initiation factor 3 (eIF-3) complex. The eIF-3 complex interacts with pix. Interacts with mxt.

The protein localises to the cytoplasm. Functionally, RNA-binding component of the eukaryotic translation initiation factor 3 (eIF-3) complex, which is involved in protein synthesis of a specialized repertoire of mRNAs and, together with other initiation factors, stimulates binding of mRNA and methionyl-tRNAi to the 40S ribosome. The eIF-3 complex specifically targets and initiates translation of a subset of mRNAs involved in cell proliferation. The protein is Eukaryotic translation initiation factor 3 subunit B of Drosophila willistoni (Fruit fly).